A 525-amino-acid chain; its full sequence is GMP synthase [glutamine-hydrolyzing] (525 aa).

In terms of domain architecture, Glutamine amidotransferase type-1 spans 13-202 (TILVLDFGSQ…AVDLCHAKQN (190 aa)). Residue Cys89 is the Nucleophile of the active site. Residues His176 and Glu178 contribute to the active site. The 198-residue stretch at 203–400 (WTMENFIDTE…LGIPHDLVWR (198 aa)) folds into the GMPS ATP-PPase domain. 231–237 (SGGVDST) provides a ligand contact to ATP. Residue Lys241 forms a Glycyl lysine isopeptide (Lys-Gly) (interchain with G-Cter in ubiquitin) linkage. Arg304 lines the XMP pocket. Lys426 is covalently cross-linked (Glycyl lysine isopeptide (Lys-Gly) (interchain with G-Cter in ubiquitin)). XMP-binding residues include Asp462, Lys517, and Glu523.

In terms of assembly, homodimer. Mg(2+) serves as cofactor.

It is found in the cytoplasm. The protein resides in the cytosol. The catalysed reaction is XMP + L-glutamine + ATP + H2O = GMP + L-glutamate + AMP + diphosphate + 2 H(+). The protein operates within purine metabolism; GMP biosynthesis; GMP from XMP (L-Gln route): step 1/1. Its function is as follows. Catalyzes the conversion of xanthine monophosphate (XMP) to GMP in the presence of glutamine and ATP through an adenyl-XMP intermediate. This is GMP synthase [glutamine-hydrolyzing] from Saccharomyces cerevisiae (strain ATCC 204508 / S288c) (Baker's yeast).